Here is a 376-residue protein sequence, read N- to C-terminus: Probable dual-specificity RNA methyltransferase RlmN (376 aa).

The Proton acceptor role is filled by E96. A Radical SAM core domain is found at 102–346; it reads YPDRSTVCVS…CTVRVERGVE (245 aa). C109 and C351 are disulfide-bonded. Positions 116, 120, and 123 each coordinate [4Fe-4S] cluster. S-adenosyl-L-methionine is bound by residues 171 to 172, S203, 226 to 228, and N308; these read GE and SLH. The active-site S-methylcysteine intermediate is the C351.

Belongs to the radical SAM superfamily. RlmN family. Requires [4Fe-4S] cluster as cofactor.

The protein resides in the cytoplasm. It carries out the reaction adenosine(2503) in 23S rRNA + 2 reduced [2Fe-2S]-[ferredoxin] + 2 S-adenosyl-L-methionine = 2-methyladenosine(2503) in 23S rRNA + 5'-deoxyadenosine + L-methionine + 2 oxidized [2Fe-2S]-[ferredoxin] + S-adenosyl-L-homocysteine. It catalyses the reaction adenosine(37) in tRNA + 2 reduced [2Fe-2S]-[ferredoxin] + 2 S-adenosyl-L-methionine = 2-methyladenosine(37) in tRNA + 5'-deoxyadenosine + L-methionine + 2 oxidized [2Fe-2S]-[ferredoxin] + S-adenosyl-L-homocysteine. Specifically methylates position 2 of adenine 2503 in 23S rRNA and position 2 of adenine 37 in tRNAs. The polypeptide is Probable dual-specificity RNA methyltransferase RlmN (Chloroflexus aurantiacus (strain ATCC 29366 / DSM 635 / J-10-fl)).